We begin with the raw amino-acid sequence, 268 residues long: Undecaprenyl-diphosphatase (268 aa).

Helical transmembrane passes span 4 to 24 (STTL…FIPV), 50 to 70 (IQLG…VSVI), 84 to 104 (VAVL…HGFI), 109 to 129 (FETP…LLFV), 144 to 164 (LPLN…VPGV), 185 to 205 (AEFS…FDLF), 214 to 234 (SALG…VLVV), and 247 to 267 (ALFG…LLAG).

It belongs to the UppP family.

It localises to the cell inner membrane. The catalysed reaction is di-trans,octa-cis-undecaprenyl diphosphate + H2O = di-trans,octa-cis-undecaprenyl phosphate + phosphate + H(+). In terms of biological role, catalyzes the dephosphorylation of undecaprenyl diphosphate (UPP). Confers resistance to bacitracin. The polypeptide is Undecaprenyl-diphosphatase (Cereibacter sphaeroides (strain ATCC 17029 / ATH 2.4.9) (Rhodobacter sphaeroides)).